A 65-amino-acid polypeptide reads, in one-letter code: Small ribosomal subunit protein bS21 (65 aa).

Belongs to the bacterial ribosomal protein bS21 family.

The polypeptide is Small ribosomal subunit protein bS21 (Geotalea daltonii (strain DSM 22248 / JCM 15807 / FRC-32) (Geobacter daltonii)).